The primary structure comprises 128 residues: Large ribosomal subunit protein uL22 (128 aa).

This sequence belongs to the universal ribosomal protein uL22 family. In terms of assembly, part of the 50S ribosomal subunit.

Its function is as follows. This protein binds specifically to 23S rRNA; its binding is stimulated by other ribosomal proteins, e.g. L4, L17, and L20. It is important during the early stages of 50S assembly. It makes multiple contacts with different domains of the 23S rRNA in the assembled 50S subunit and ribosome. Functionally, the globular domain of the protein is located near the polypeptide exit tunnel on the outside of the subunit, while an extended beta-hairpin is found that lines the wall of the exit tunnel in the center of the 70S ribosome. This is Large ribosomal subunit protein uL22 from Prochlorococcus marinus (strain AS9601).